The primary structure comprises 410 residues: Probable intron-encoded endonuclease bI1 (410 aa).

The tract at residues 1-131 (MRLLKTHPIL…VLMMAIAFLG (131 aa)) is COB exon 1 encoded. The next 3 helical transmembrane spans lie at 32–52 (FGSL…FLAM), 75–95 (GWLI…FVYL), and 112–132 (LLWS…FLGF). The interval 132 to 410 (FNGQKYMCFY…KKNYIVKVIK (279 aa)) is COB intron 1 encoded. Residues 196–286 (PFSGIYMIVN…LETLKPEYNI (91 aa)) enclose the GIY-YIG domain.

This sequence to endonucleases of group I introns of fungi and phage. In terms of processing, the mature protein may arise from proteolytic cleavage of an in-frame translation of COB exon 1 plus intron 1, containing the bI1 open reading frame.

The protein localises to the mitochondrion. It is found in the membrane. Mitochondrial DNA endonuclease involved in intron homing. This is Probable intron-encoded endonuclease bI1 (bI1) from Mycosarcoma maydis (Corn smut fungus).